Here is a 504-residue protein sequence, read N- to C-terminus: ATP synthase subunit alpha (504 aa).

Residue 171 to 178 (GDRATGKT) participates in ATP binding.

Belongs to the ATPase alpha/beta chains family. As to quaternary structure, F-type ATPases have 2 components, CF(1) - the catalytic core - and CF(0) - the membrane proton channel. CF(1) has five subunits: alpha(3), beta(3), gamma(1), delta(1), epsilon(1). CF(0) has three main subunits: a(1), b(2) and c(9-12). The alpha and beta chains form an alternating ring which encloses part of the gamma chain. CF(1) is attached to CF(0) by a central stalk formed by the gamma and epsilon chains, while a peripheral stalk is formed by the delta and b chains.

It is found in the cell inner membrane. It catalyses the reaction ATP + H2O + 4 H(+)(in) = ADP + phosphate + 5 H(+)(out). Functionally, produces ATP from ADP in the presence of a proton gradient across the membrane. The alpha chain is a regulatory subunit. This chain is ATP synthase subunit alpha, found in Sulfurihydrogenibium sp. (strain YO3AOP1).